Consider the following 177-residue polypeptide: uncharacterized protein (177 aa).

This is an uncharacterized protein from Treponema pallidum (strain Nichols).